The primary structure comprises 487 residues: MNGTLDHPDQPDLDAIKMFVGQVPRTWSEKDLRELFEQYGAVYEINILRDRSQNPPQSKGCCFVTFYTRKAALEAQNALHNMKVLPGMHHPIQMKPADSEKNNAVEDRKLFIGMISKKCTENDIRVMFSSFGQIEECRILRGPDGLSRGCAFVTFTTRTMAQTAIKAMHQAQTMEGCSSPMVVKFADTQKDKEQKRMAQQLQQQMQQISAASVWGNLAGLNTLGPQYLALYLQLLQQTANSGNLNTLSSLHPMGGLNAMQLQNLAALAAAASAAQNTPSGTNALTTSSSPLSVLTSSAGSSPSSSSSNSVNPIASLGALQTLAGATAGLNVGSLAGMAALNGGLGSSGLSNGTGSTMEALTQAYSGIQQYAAAALPTLYNQNLLTQQSIGAAGSQKEGPEGANLFIYHLPQEFGDQDLLQMFMPFGNVVSAKVFIDKQTNLSKCFGFVSYDNPVSAQAAIQSMNGFQIGMKRLKVQLKRSKNDSKPY.

Met-1 carries the post-translational modification N-acetylmethionine. Thr-4 carries the post-translational modification Phosphothreonine. RRM domains follow at residues 16-99 and 108-188; these read IKMF…PADS and RKLF…FADT. A Glycyl lysine isopeptide (Lys-Gly) (interchain with G-Cter in SUMO2) cross-link involves residue Lys-109. Phosphoserine is present on residues Ser-179 and Ser-303. The segment at 277 to 310 is disordered; that stretch reads TPSGTNALTTSSSPLSVLTSSAGSSPSSSSSNSV. Positions 283–310 are enriched in low complexity; it reads ALTTSSSPLSVLTSSAGSSPSSSSSNSV. Positions 402-480 constitute an RRM 3 domain; the sequence is ANLFIYHLPQ…KRLKVQLKRS (79 aa).

This sequence belongs to the CELF/BRUNOL family. As to quaternary structure, interacts with HNRNPH1; the interaction in RNA-dependent. Interacts with PARN. Component of an EIF2 complex at least composed of CELF1/CUGBP1, CALR, CALR3, EIF2S1, EIF2S2, HSP90B1 and HSPA5. Associates with polysomes.

It localises to the nucleus. The protein resides in the cytoplasm. In terms of biological role, RNA-binding protein implicated in the regulation of several post-transcriptional events. Involved in pre-mRNA alternative splicing, mRNA translation and stability. Mediates exon inclusion and/or exclusion in pre-mRNA that are subject to tissue-specific and developmentally regulated alternative splicing. Specifically activates exon 5 inclusion of cardiac isoforms of TNNT2 during heart remodeling at the juvenile to adult transition. Acts both as an activator and as a repressor of a pair of coregulated exons: promotes inclusion of the smooth muscle (SM) exon but exclusion of the non-muscle (NM) exon in actinin pre-mRNAs. Activates SM exon 5 inclusion by antagonizing the repressive effect of PTB. Promotes exclusion of exon 11 of the INSR pre-mRNA. Inhibits, together with HNRNPH1, insulin receptor (IR) pre-mRNA exon 11 inclusion in myoblast. Increases translation and controls the choice of translation initiation codon of CEBPB mRNA. Increases mRNA translation of CEBPB in aging liver. Increases translation of CDKN1A mRNA by antagonizing the repressive effect of CALR3. Mediates rapid cytoplasmic mRNA deadenylation. Recruits the deadenylase PARN to the poly(A) tail of EDEN-containing mRNAs to promote their deadenylation. Required for completion of spermatogenesis. Binds to (CUG)n triplet repeats in the 3'-UTR of transcripts such as DMPK and to Bruno response elements (BREs). Binds to muscle-specific splicing enhancer (MSE) intronic sites flanking the alternative exon 5 of TNNT2 pre-mRNA. Binds to AU-rich sequences (AREs or EDEN-like) localized in the 3'-UTR of JUN and FOS mRNAs. Binds to the IR RNA. Binds to the 5'-region of CDKN1A and CEBPB mRNAs. Binds with the 5'-region of CEBPB mRNA in aging liver. May be a specific regulator of miRNA biogenesis. Binds to primary microRNA pri-MIR140 and, with CELF2, negatively regulates the processing to mature miRNA. This Rattus norvegicus (Rat) protein is CUGBP Elav-like family member 1 (Celf1).